The sequence spans 504 residues: Endosomal/lysosomal proton channel TMEM175 (504 aa).

The tract at residues 1-27 (MSQPRTPEQALDTPGDCPPGRRDEDAG) is disordered. Topologically, residues 1–33 (MSQPRTPEQALDTPGDCPPGRRDEDAGEGIQCS) are cytoplasmic. A Phosphothreonine modification is found at threonine 6. The helical transmembrane segment at 34 to 56 (QRMLSFSDALLSIIATVMILPVT) threads the bilayer. Residues 35-41 (RMLSFSD) carry the RxxxFSD motif 1 motif. Residues 57-77 (HTEISPEQQFDRSVQRLLATR) are Lumenal-facing. The tract at residues 58–63 (TEISPE) is short helix H1-1. The short helix H2-1 stretch occupies residues 65–71 (QFDRSVQ). A helical transmembrane segment spans residues 78–100 (IAVYLMTFLIVTVAWAAHTRLFQ). The Cytoplasmic portion of the chain corresponds to 101–106 (VVGKTD). The chain crosses the membrane as a helical span at residues 107-128 (DTLALLNLACMMTITFLPYTFS). The Lumenal portion of the chain corresponds to 129–138 (LMVTFPDVPL). The chain crosses the membrane as a helical span at residues 139-160 (GIFLFCVCVIAIGVVQALIVGY). The Cytoplasmic segment spans residues 161-184 (AFHFPHLLSPQIQRSAHRALYRRH). The chain crosses the membrane as a helical span at residues 185–205 (VLGIVLQGPALCFAAAIFSLF). The Lumenal segment spans residues 206–210 (FVPLS). The helical transmembrane segment at 211-230 (YLLMVTVILLPYVSKVTGWC) threads the bilayer. Over 231 to 257 (RDRLLGHREPSAHPVEVFSFDLHEPLS) the chain is Cytoplasmic. The helical transmembrane segment at 258 to 282 (KERVEAFSDGVYAIVATLLILDICE) threads the bilayer. Positions 260 to 266 (RVEAFSD) match the RxxxFSD motif 2 motif. Over 283-309 (DNVPDPKDVKERFSGSLVAALSATGPR) the chain is Lumenal. Residues 288 to 296 (PKDVKERFS) form a short helix H1-2 region. The interval 298–304 (SLVAALS) is short helix H2-2. The helical transmembrane segment at 310-332 (FLAYFGSFATVGLLWFAHHSLFL) threads the bilayer. Over 333-338 (HVRKAT) the chain is Cytoplasmic. Residues 339-360 (RAMGLLNTLSLAFVGGLPLAYQ) form a helical membrane-spanning segment. The Lumenal portion of the chain corresponds to 361–375 (QTSAFARQPRDELER). A helical transmembrane segment spans residues 376-396 (VRVSCTIIFLASIFQLAMWTT). Over 397-416 (ALLHQAETLQPSVWFGGREH) the chain is Cytoplasmic. A helical membrane pass occupies residues 417-440 (VLMFAKLALYPCASLLAFASTCLL). Over 441–442 (SR) the chain is Lumenal. A helical membrane pass occupies residues 443–469 (FSVGIFHLMQIAVPCAFLLLRLLVGLA). Over 470–504 (LATLRVLRGLARPEHPPPAPTGQDDPQSQLLPAPC) the chain is Cytoplasmic. The tract at residues 483–504 (EHPPPAPTGQDDPQSQLLPAPC) is disordered. Polar residues predominate over residues 493-504 (DDPQSQLLPAPC).

The protein belongs to the TMEM175 family. In terms of assembly, homodimer. Interacts with AKT (AKT1, AKT2 or AKT3); leading to formation of the lysoK(GF) complex, which activates the channel. Interacts with LAMP1; inhibiting the proton channel activity of TMEM175. Interacts with LAMP2; inhibiting the proton channel activity of TMEM175. In terms of tissue distribution, widely expressed.

The protein resides in the endosome membrane. The protein localises to the lysosome membrane. The enzyme catalyses H(+)(in) = H(+)(out). It catalyses the reaction K(+)(in) = K(+)(out). With respect to regulation, active at low pH (under pH 4.6): proton channel activity is activated by luminal side protons. Polyunsaturated fatty acids, such as arachidonic acid, also activate the channel activity. Proton channel activity is directly inhibited by LAMP1 or LAMP2, facilitating lysosomal acidification. Channel activity is activated following interaction with AKT (AKT1, AKT2 or AKT3): interaction promotes activation from closed to an open state. Activation by AKT is independent of AKT serine/threonine-protein kinase activity. Functionally, proton-activated proton channel that catalyzes proton efflux from endosomes and lysosomes to maintain a steady-state pH. Activated at low pH (under pH 4.6) by luminal side protons: selectively mediates lysosomal proton release from lysosomes, eliciting a proton leak that balances V-ATPase activity to maintain pH homeostasis. Regulation of lumenal pH stability is required for autophagosome-lysosome fusion. Also acts as a potassium channel at higher pH, regulating potassium conductance in endosomes and lysosomes. Constitutes the pore-forming subunit of the lysoK(GF) complex, a complex activated by extracellular growth factors. The lysoK(GF) complex is composed of TMEM175 and AKT (AKT1, AKT2 or AKT3), a major target of growth factor receptors: in the complex, TMEM175 channel is opened by conformational changes by AKT, leading to its activation. The lysoK(GF) complex is required to protect neurons against stress-induced damage. This chain is Endosomal/lysosomal proton channel TMEM175, found in Homo sapiens (Human).